Reading from the N-terminus, the 101-residue chain is UPF0235 protein Cpha266_2081 (101 aa).

This sequence belongs to the UPF0235 family.

This Chlorobium phaeobacteroides (strain DSM 266 / SMG 266 / 2430) protein is UPF0235 protein Cpha266_2081.